The primary structure comprises 961 residues: Probable exosome complex exonuclease RRP44 (961 aa).

The PINc domain occupies 73–188 (HALIVDSTSL…LVFDEDSKKR (116 aa)). In terms of domain architecture, CSD1 spans 232–338 (IFDEYLSHDR…DEENDDENDE (107 aa)). Positions 322 to 346 (ADDMGNEDEENDDENDEPKAKKSKK) are disordered. The span at 325 to 337 (MGNEDEENDDEND) shows a compositional bias: acidic residues. A CSD2 domain is found at 381–447 (LFCPAERLIP…ENEVLLLEHD (67 aa)). The 331-residue stretch at 479–809 (RVDLRDLTIC…IVHRLLAAAI (331 aa)) folds into the RNB domain.

Belongs to the RNR ribonuclease family. In terms of assembly, component of the RNA exosome complex. Ubiquitously expressed.

The protein resides in the nucleus. The protein localises to the nucleoplasm. In terms of biological role, putative catalytic component of the RNA exosome complex which has 3'-&gt;5' exoribonuclease activity and participates in a multitude of cellular RNA processing and degradation events. Has both 3'-5' exonuclease and endonuclease activities. Involved in regulation of antisense ribosomal siRNA production. The polypeptide is Probable exosome complex exonuclease RRP44 (dis-3) (Caenorhabditis elegans).